The sequence spans 400 residues: tRNA(Ile)-lysidine synthase (400 aa).

25 to 30 (SGGVDS) lines the ATP pocket.

The protein belongs to the tRNA(Ile)-lysidine synthase family.

It is found in the cytoplasm. The enzyme catalyses cytidine(34) in tRNA(Ile2) + L-lysine + ATP = lysidine(34) in tRNA(Ile2) + AMP + diphosphate + H(+). In terms of biological role, ligates lysine onto the cytidine present at position 34 of the AUA codon-specific tRNA(Ile) that contains the anticodon CAU, in an ATP-dependent manner. Cytidine is converted to lysidine, thus changing the amino acid specificity of the tRNA from methionine to isoleucine. The sequence is that of tRNA(Ile)-lysidine synthase from Francisella philomiragia subsp. philomiragia (strain ATCC 25017 / CCUG 19701 / FSC 153 / O#319-036).